A 347-amino-acid polypeptide reads, in one-letter code: Gibberellin 3-beta-dioxygenase 2 (347 aa).

Residues 197–301 enclose the Fe2OG dioxygenase domain; that stretch reads DFQGTQAVIQ…RFSMAYLWGP (105 aa). Fe cation is bound by residues His-225, Asp-227, and His-282. Residue Arg-292 is part of the active site. Arg-292 lines the 2-oxoglutarate pocket.

This sequence belongs to the iron/ascorbate-dependent oxidoreductase family. GA3OX subfamily. Requires L-ascorbate as cofactor. It depends on Fe(2+) as a cofactor. Highly expressed in seedlings but also expressed in roots, leaves, stems, flowers, siliques and seeds. Detected predominantly in the hypocotyl and roots of young seedlings and in the petioles and vasculature of leaves. Not expressed in the shoot apical meristem, but found in the elongation zone, the quiescent center cells and the columella cells of the root tips. Found in the cortex and the endodermis of the embryo axis in germinating seeds.

The enzyme catalyses gibberellin A20 + 2-oxoglutarate + O2 = gibberellin A1 + succinate + CO2. The protein operates within plant hormone biosynthesis; gibberellin biosynthesis. Its function is as follows. Converts the inactive gibberellin (GA) precursors GA9 and GA20 in the bioactives gibberellins GA4 and GA1. Involved in the production of bioactive GA for vegetative growth and development. This is Gibberellin 3-beta-dioxygenase 2 from Arabidopsis thaliana (Mouse-ear cress).